A 911-amino-acid polypeptide reads, in one-letter code: Transcription factor E2F7 (911 aa).

The residue at position 94 (serine 94) is a Phosphoserine. A DNA-binding region spans residues 141-210 (RKQKSLGLLC…VAKNQYSWHG (70 aa)). 3 disordered regions span residues 239 to 281 (QKEL…ANSR), 409 to 433 (SFNS…PYRQ), and 565 to 706 (SPGS…SPLQ). Residues 243–257 (NPIDHKSGERRRDGC) show a composition bias toward basic and acidic residues. A DNA-binding region spans residues 281–366 (RKDKSLKIMS…GRKPAFKWIG (86 aa)). Position 409 is a phosphoserine (serine 409). The span at 415 to 424 (ASERTQRKVN) shows a compositional bias: basic and acidic residues. Positions 566-579 (PGSGSGSGSVGGGS) are enriched in gly residues. Positions 599-621 (ERRLQEEEEEPATKRQCRDHEDG) are enriched in basic and acidic residues. Over residues 669–687 (KATTNGFVSSEWGNPCSNT) the composition is skewed to polar residues. Over residues 688–698 (EIEKPSEENES) the composition is skewed to basic and acidic residues. A Phosphoserine modification is found at serine 840. Residues 873–911 (FFKTPGSLGDPVLRRKERNQSRSSSSAQRRLEISSGGTD) are disordered.

The protein belongs to the E2F/DP family. In terms of assembly, homodimer and heterodimer: mainly forms homodimers and, to a lesser extent, heterodimers with E2F8. Dimerization is important for DNA-binding. Interacts with HIF1A. Interacts with MN1.

The protein localises to the nucleus. Its function is as follows. Atypical E2F transcription factor that participates in various processes such as angiogenesis, polyploidization of specialized cells and DNA damage response. Mainly acts as a transcription repressor that binds DNA independently of DP proteins and specifically recognizes the E2 recognition site 5'-TTTC[CG]CGC-3'. Directly represses transcription of classical E2F transcription factors such as E2F1. Acts as a regulator of S-phase by recognizing and binding the E2-related site 5'-TTCCCGCC-3' and mediating repression of G1/S-regulated genes. Plays a key role in polyploidization of cells in placenta and liver by regulating the endocycle, probably by repressing genes promoting cytokinesis and antagonizing action of classical E2F proteins (E2F1, E2F2 and/or E2F3). Required for placental development by promoting polyploidization of trophoblast giant cells. Also involved in DNA damage response: up-regulated by p53/TP53 following genotoxic stress and acts as a downstream effector of p53/TP53-dependent repression by mediating repression of indirect p53/TP53 target genes involved in DNA replication. Acts as a promoter of sprouting angiogenesis, possibly by acting as a transcription activator: associates with HIF1A, recognizes and binds the VEGFA promoter, which is different from canonical E2 recognition site, and activates expression of the VEGFA gene. Acts as a negative regulator of keratinocyte differentiation. The polypeptide is Transcription factor E2F7 (E2F7) (Bos taurus (Bovine)).